A 188-amino-acid chain; its full sequence is dCTP deaminase (188 aa).

109 to 114 (KSTYAR) contacts dCTP. E135 functions as the Proton donor/acceptor in the catalytic mechanism. Residues Q154, Y168, and Q178 each coordinate dCTP.

It belongs to the dCTP deaminase family. Homotrimer.

The catalysed reaction is dCTP + H2O + H(+) = dUTP + NH4(+). It functions in the pathway pyrimidine metabolism; dUMP biosynthesis; dUMP from dCTP (dUTP route): step 1/2. Functionally, catalyzes the deamination of dCTP to dUTP. The polypeptide is dCTP deaminase (Helicobacter hepaticus (strain ATCC 51449 / 3B1)).